Here is a 501-residue protein sequence, read N- to C-terminus: Armadillo repeat-containing protein 6 (501 aa).

Ser64 bears the Phosphoserine mark. ARM repeat units lie at residues 220 to 264 (GVLP…HAHN), 274 to 318 (KGLK…DLGG), 319 to 369 (LSIL…RAGG), and 370 to 412 (TESI…VEGG). The residue at position 263 (His263) is a Pros-methylhistidine.

The protein belongs to the ARMC6 family. Post-translationally, methylated at His-263 by METTL9.

The polypeptide is Armadillo repeat-containing protein 6 (ARMC6) (Pongo abelii (Sumatran orangutan)).